We begin with the raw amino-acid sequence, 277 residues long: Release factor glutamine methyltransferase (277 aa).

S-adenosyl-L-methionine-binding positions include Gly117–Gly121, Asp140, Trp168, and Asn183. Asn183–Tyr186 serves as a coordination point for substrate.

Belongs to the protein N5-glutamine methyltransferase family. PrmC subfamily.

It carries out the reaction L-glutaminyl-[peptide chain release factor] + S-adenosyl-L-methionine = N(5)-methyl-L-glutaminyl-[peptide chain release factor] + S-adenosyl-L-homocysteine + H(+). Methylates the class 1 translation termination release factors RF1/PrfA and RF2/PrfB on the glutamine residue of the universally conserved GGQ motif. In Salmonella typhimurium (strain LT2 / SGSC1412 / ATCC 700720), this protein is Release factor glutamine methyltransferase.